Here is a 338-residue protein sequence, read N- to C-terminus: Ketol-acid reductoisomerase (NADP(+)) (338 aa).

The KARI N-terminal Rossmann domain occupies 1-181; that stretch reads MKVFYDKDAD…GGGRAGIIET (181 aa). NADP(+) is bound by residues 24-27, Arg47, and Ser52; that span reads YGSQ. His107 is a catalytic residue. Gly133 contacts NADP(+). The 146-residue stretch at 182–327 folds into the KARI C-terminal knotted domain; sequence NFREETETDL…SKLRAMMPWI (146 aa). Mg(2+)-binding residues include Asp190, Glu194, Glu226, and Glu230. Residue Ser251 coordinates substrate.

Belongs to the ketol-acid reductoisomerase family. Requires Mg(2+) as cofactor.

It catalyses the reaction (2R)-2,3-dihydroxy-3-methylbutanoate + NADP(+) = (2S)-2-acetolactate + NADPH + H(+). It carries out the reaction (2R,3R)-2,3-dihydroxy-3-methylpentanoate + NADP(+) = (S)-2-ethyl-2-hydroxy-3-oxobutanoate + NADPH + H(+). The protein operates within amino-acid biosynthesis; L-isoleucine biosynthesis; L-isoleucine from 2-oxobutanoate: step 2/4. It functions in the pathway amino-acid biosynthesis; L-valine biosynthesis; L-valine from pyruvate: step 2/4. Its function is as follows. Involved in the biosynthesis of branched-chain amino acids (BCAA). Catalyzes an alkyl-migration followed by a ketol-acid reduction of (S)-2-acetolactate (S2AL) to yield (R)-2,3-dihydroxy-isovalerate. In the isomerase reaction, S2AL is rearranged via a Mg-dependent methyl migration to produce 3-hydroxy-3-methyl-2-ketobutyrate (HMKB). In the reductase reaction, this 2-ketoacid undergoes a metal-dependent reduction by NADPH to yield (R)-2,3-dihydroxy-isovalerate. The sequence is that of Ketol-acid reductoisomerase (NADP(+)) from Burkholderia thailandensis (strain ATCC 700388 / DSM 13276 / CCUG 48851 / CIP 106301 / E264).